A 119-amino-acid polypeptide reads, in one-letter code: uncharacterized protein (119 aa).

This is an uncharacterized protein from Dactylococcopsis salina (Myxobaktron salinum).